A 739-amino-acid chain; its full sequence is Phosphoribosylformylglycinamidine synthase subunit PurL (739 aa).

Residue histidine 54 is part of the active site. Residues tyrosine 57 and lysine 96 each contribute to the ATP site. Residue glutamate 98 coordinates Mg(2+). Residues 99 to 102 (SHNH) and arginine 121 each bind substrate. The active-site Proton acceptor is the histidine 100. Aspartate 122 is a binding site for Mg(2+). A substrate-binding site is contributed by glutamine 245. Aspartate 275 lines the Mg(2+) pocket. 319 to 321 (ESQ) lines the substrate pocket. ATP is bound by residues aspartate 504 and glycine 541. Asparagine 542 lines the Mg(2+) pocket. Residue serine 544 coordinates substrate.

The protein belongs to the FGAMS family. As to quaternary structure, monomer. Part of the FGAM synthase complex composed of 1 PurL, 1 PurQ and 2 PurS subunits.

Its subcellular location is the cytoplasm. It carries out the reaction N(2)-formyl-N(1)-(5-phospho-beta-D-ribosyl)glycinamide + L-glutamine + ATP + H2O = 2-formamido-N(1)-(5-O-phospho-beta-D-ribosyl)acetamidine + L-glutamate + ADP + phosphate + H(+). It functions in the pathway purine metabolism; IMP biosynthesis via de novo pathway; 5-amino-1-(5-phospho-D-ribosyl)imidazole from N(2)-formyl-N(1)-(5-phospho-D-ribosyl)glycinamide: step 1/2. Functionally, part of the phosphoribosylformylglycinamidine synthase complex involved in the purines biosynthetic pathway. Catalyzes the ATP-dependent conversion of formylglycinamide ribonucleotide (FGAR) and glutamine to yield formylglycinamidine ribonucleotide (FGAM) and glutamate. The FGAM synthase complex is composed of three subunits. PurQ produces an ammonia molecule by converting glutamine to glutamate. PurL transfers the ammonia molecule to FGAR to form FGAM in an ATP-dependent manner. PurS interacts with PurQ and PurL and is thought to assist in the transfer of the ammonia molecule from PurQ to PurL. The sequence is that of Phosphoribosylformylglycinamidine synthase subunit PurL from Lactococcus lactis subsp. cremoris (Streptococcus cremoris).